Reading from the N-terminus, the 216-residue chain is Probable nicotinate-nucleotide adenylyltransferase (216 aa).

It belongs to the NadD family.

The catalysed reaction is nicotinate beta-D-ribonucleotide + ATP + H(+) = deamido-NAD(+) + diphosphate. It participates in cofactor biosynthesis; NAD(+) biosynthesis; deamido-NAD(+) from nicotinate D-ribonucleotide: step 1/1. Catalyzes the reversible adenylation of nicotinate mononucleotide (NaMN) to nicotinic acid adenine dinucleotide (NaAD). In Geobacter metallireducens (strain ATCC 53774 / DSM 7210 / GS-15), this protein is Probable nicotinate-nucleotide adenylyltransferase.